A 268-amino-acid chain; its full sequence is 4-hydroxy-tetrahydrodipicolinate reductase (268 aa).

Residues 10 to 15 (GSTGRM), E36, 99 to 101 (GTT), and 123 to 126 (APNM) each bind NAD(+). The active-site Proton donor/acceptor is H156. H157 contributes to the (S)-2,3,4,5-tetrahydrodipicolinate binding site. K160 functions as the Proton donor in the catalytic mechanism. 166–167 (GT) serves as a coordination point for (S)-2,3,4,5-tetrahydrodipicolinate.

The protein belongs to the DapB family.

The protein resides in the cytoplasm. The catalysed reaction is (S)-2,3,4,5-tetrahydrodipicolinate + NAD(+) + H2O = (2S,4S)-4-hydroxy-2,3,4,5-tetrahydrodipicolinate + NADH + H(+). It carries out the reaction (S)-2,3,4,5-tetrahydrodipicolinate + NADP(+) + H2O = (2S,4S)-4-hydroxy-2,3,4,5-tetrahydrodipicolinate + NADPH + H(+). The protein operates within amino-acid biosynthesis; L-lysine biosynthesis via DAP pathway; (S)-tetrahydrodipicolinate from L-aspartate: step 4/4. In terms of biological role, catalyzes the conversion of 4-hydroxy-tetrahydrodipicolinate (HTPA) to tetrahydrodipicolinate. The polypeptide is 4-hydroxy-tetrahydrodipicolinate reductase (Nitrosomonas eutropha (strain DSM 101675 / C91 / Nm57)).